The following is a 328-amino-acid chain: Fructose-1,6-bisphosphatase class 1 (328 aa).

Mg(2+) contacts are provided by glutamate 91, aspartate 110, leucine 112, and aspartate 113. Residues 113-116 (DGSS), asparagine 205, and 257-259 (YLY) contribute to the substrate site. Glutamate 277 is a binding site for Mg(2+).

It belongs to the FBPase class 1 family. Homotetramer. Requires Mg(2+) as cofactor.

Its subcellular location is the cytoplasm. The catalysed reaction is beta-D-fructose 1,6-bisphosphate + H2O = beta-D-fructose 6-phosphate + phosphate. Its pathway is carbohydrate biosynthesis; gluconeogenesis. This is Fructose-1,6-bisphosphatase class 1 from Azorhizobium caulinodans (strain ATCC 43989 / DSM 5975 / JCM 20966 / LMG 6465 / NBRC 14845 / NCIMB 13405 / ORS 571).